A 750-amino-acid chain; its full sequence is 1,4-alpha-glucan branching enzyme GlgB (750 aa).

Asp425 functions as the Nucleophile in the catalytic mechanism. Catalysis depends on Glu478, which acts as the Proton donor.

This sequence belongs to the glycosyl hydrolase 13 family. GlgB subfamily. Monomer.

The enzyme catalyses Transfers a segment of a (1-&gt;4)-alpha-D-glucan chain to a primary hydroxy group in a similar glucan chain.. It participates in glycan biosynthesis; glycogen biosynthesis. In terms of biological role, catalyzes the formation of the alpha-1,6-glucosidic linkages in glycogen by scission of a 1,4-alpha-linked oligosaccharide from growing alpha-1,4-glucan chains and the subsequent attachment of the oligosaccharide to the alpha-1,6 position. The protein is 1,4-alpha-glucan branching enzyme GlgB of Cupriavidus pinatubonensis (strain JMP 134 / LMG 1197) (Cupriavidus necator (strain JMP 134)).